The primary structure comprises 251 residues: Probable transcriptional regulatory protein Pmob_0807 (251 aa).

A disordered region spans residues 1–22 (MSGHNKWANIKHRKGAQDAKRS).

It belongs to the TACO1 family.

It is found in the cytoplasm. This is Probable transcriptional regulatory protein Pmob_0807 from Petrotoga mobilis (strain DSM 10674 / SJ95).